Here is a 246-residue protein sequence, read N- to C-terminus: Glucosamine-6-phosphate deaminase (246 aa).

Catalysis depends on Asp-67, which acts as the Proton acceptor; for enolization step. Catalysis depends on Asn-136, which acts as the For ring-opening step. The Proton acceptor; for ring-opening step role is filled by His-138. Glu-143 (for ring-opening step) is an active-site residue.

The protein belongs to the glucosamine/galactosamine-6-phosphate isomerase family. NagB subfamily.

The enzyme catalyses alpha-D-glucosamine 6-phosphate + H2O = beta-D-fructose 6-phosphate + NH4(+). The protein operates within amino-sugar metabolism; N-acetylneuraminate degradation; D-fructose 6-phosphate from N-acetylneuraminate: step 5/5. Catalyzes the reversible isomerization-deamination of glucosamine 6-phosphate (GlcN6P) to form fructose 6-phosphate (Fru6P) and ammonium ion. The protein is Glucosamine-6-phosphate deaminase of Halalkalibacterium halodurans (strain ATCC BAA-125 / DSM 18197 / FERM 7344 / JCM 9153 / C-125) (Bacillus halodurans).